We begin with the raw amino-acid sequence, 519 residues long: Mannosyl-oligosaccharide alpha-1,2-mannosidase (519 aa).

An N-terminal signal peptide occupies residues 1–22 (MKGSPVLAVCAAALTLIPSVVA). N-linked (GlcNAc...) asparagine glycosylation is present at Asn187. Cysteines 337 and 366 form a disulfide. Glu380 serves as the catalytic Proton donor. The N-linked (GlcNAc...) asparagine glycan is linked to Asn443. Thr507 provides a ligand contact to Ca(2+).

The protein belongs to the glycosyl hydrolase 47 family. Monomer. Ca(2+) is required as a cofactor. Requires Mg(2+) as cofactor.

Its subcellular location is the secreted. The catalysed reaction is N(4)-(alpha-D-Man-(1-&gt;2)-alpha-D-Man-(1-&gt;2)-alpha-D-Man-(1-&gt;3)-[alpha-D-Man-(1-&gt;2)-alpha-D-Man-(1-&gt;3)-[alpha-D-Man-(1-&gt;2)-alpha-D-Man-(1-&gt;6)]-alpha-D-Man-(1-&gt;6)]-beta-D-Man-(1-&gt;4)-beta-D-GlcNAc-(1-&gt;4)-beta-D-GlcNAc)-L-asparaginyl-[protein] (N-glucan mannose isomer 9A1,2,3B1,2,3) + 4 H2O = N(4)-(alpha-D-Man-(1-&gt;3)-[alpha-D-Man-(1-&gt;3)-[alpha-D-Man-(1-&gt;6)]-alpha-D-Man-(1-&gt;6)]-beta-D-Man-(1-&gt;4)-beta-D-GlcNAc-(1-&gt;4)-beta-D-GlcNAc)-L-asparaginyl-[protein] (N-glucan mannose isomer 5A1,2) + 4 beta-D-mannose. It catalyses the reaction N(4)-(alpha-D-Man-(1-&gt;2)-alpha-D-Man-(1-&gt;2)-alpha-D-Man-(1-&gt;3)-[alpha-D-Man-(1-&gt;3)-[alpha-D-Man-(1-&gt;2)-alpha-D-Man-(1-&gt;6)]-alpha-D-Man-(1-&gt;6)]-beta-D-Man-(1-&gt;4)-beta-D-GlcNAc-(1-&gt;4)-beta-D-GlcNAc)-L-asparaginyl-[protein] (N-glucan mannose isomer 8A1,2,3B1,3) + 3 H2O = N(4)-(alpha-D-Man-(1-&gt;3)-[alpha-D-Man-(1-&gt;3)-[alpha-D-Man-(1-&gt;6)]-alpha-D-Man-(1-&gt;6)]-beta-D-Man-(1-&gt;4)-beta-D-GlcNAc-(1-&gt;4)-beta-D-GlcNAc)-L-asparaginyl-[protein] (N-glucan mannose isomer 5A1,2) + 3 beta-D-mannose. It participates in protein modification; protein glycosylation. Alpha-mannosidase involved in the maturation of Asn-linked oligosaccharides. Progressively trims alpha-1,2-linked mannose residues from Man(9)GlcNAc(2) to produce Man(5)GlcNAc(2). This Coccidioides posadasii (strain RMSCC 757 / Silveira) (Valley fever fungus) protein is Mannosyl-oligosaccharide alpha-1,2-mannosidase.